The chain runs to 210 residues: Large ribosomal subunit protein uL3 (210 aa).

The tract at residues 125-151 (RHGQSRGPMSHGSRYHRRPGSMGPVAP) is disordered.

This sequence belongs to the universal ribosomal protein uL3 family. Part of the 50S ribosomal subunit. Forms a cluster with proteins L14 and L19.

In terms of biological role, one of the primary rRNA binding proteins, it binds directly near the 3'-end of the 23S rRNA, where it nucleates assembly of the 50S subunit. The chain is Large ribosomal subunit protein uL3 from Bacillus mycoides (strain KBAB4) (Bacillus weihenstephanensis).